The following is a 344-amino-acid chain: MFSNLSNSEILNNLLEGRDLDDLTSRSLMQRWLNDKVSDVETGAFLSALRAKGSTGVELSSMAEELLNVCDLPVARPNLYLVDTCGTGGDGANTFNISTAVAFVAASCGVKIAKHGNKSASGKVGSADVLLNLGLNLNCSLEKVINAVNEIGITFLFAPVWHKSLIKLAPLRKTLGIRTVFNQLGPLVNPLRPNAQVLGVASEDFLKPMGSALLKMGMNRAIVVHGSGGLDEASLQGENKLVFVENGELRFSEINISDFNHENIANEKLVVSDFQSNDEILKSVLNGSGQKSHIDVVALNAALVLWVAGIEDDLNEGFNKALISINQGDPWKKFLLLKNYLSEN.

Residues G86, 89–90 (GD), T94, 96–99 (NIST), 114–122 (KHGNKSASG), and S126 each bind 5-phospho-alpha-D-ribose 1-diphosphate. Residue G86 coordinates anthranilate. Position 98 (S98) interacts with Mg(2+). N117 contacts anthranilate. Residue R172 coordinates anthranilate. Positions 231 and 232 each coordinate Mg(2+).

It belongs to the anthranilate phosphoribosyltransferase family. As to quaternary structure, homodimer. Mg(2+) serves as cofactor.

The catalysed reaction is N-(5-phospho-beta-D-ribosyl)anthranilate + diphosphate = 5-phospho-alpha-D-ribose 1-diphosphate + anthranilate. It participates in amino-acid biosynthesis; L-tryptophan biosynthesis; L-tryptophan from chorismate: step 2/5. Functionally, catalyzes the transfer of the phosphoribosyl group of 5-phosphorylribose-1-pyrophosphate (PRPP) to anthranilate to yield N-(5'-phosphoribosyl)-anthranilate (PRA). The protein is Anthranilate phosphoribosyltransferase of Prochlorococcus marinus (strain MIT 9215).